The chain runs to 263 residues: Apolipoprotein A-I (263 aa).

The N-terminal stretch at 1-18 (MKAVVLAVAVLFLTGSQA) is a signal peptide. Tandem repeats lie at residues 66–87 (LKLLDNWDTLSTTFSKLRSELG) and 88–109 (PVTQEFWDNLEKDTEWLRQEMN). The interval 66–263 (LKLLDNWDTL…DEVSKKLSAQ (198 aa)) is 10 X approximate tandem repeats. Position 108 is a methionine sulfoxide (M108). Residues 110-120 (KDLVEVKEKVQ) form a 3; half-length repeat. 5 repeat units span residues 121–142 (PYLKNFQEKVQLELEHYRKKVE), 143–164 (PLGTDLRDGARQKLQELQEKLT), 165–186 (PLGEDLRDRARQHVDELRAQLG), 187–206 (PYSDQMRQRLTQRLEALKDS), and 207–228 (ASLAEYQAKAQEHLKTFSEKAK). The 9; half-length repeat unit spans residues 229-239 (PALEDLRLGLL). Repeat 10 spans residues 240-263 (PVLESLKASFLSSIDEVSKKLSAQ).

Belongs to the apolipoprotein A1/A4/E family. As to quaternary structure, homodimer. Interacts with APOA1BP and CLU. Component of a sperm activating protein complex (SPAP), consisting of APOA1, an immunoglobulin heavy chain, an immunoglobulin light chain and albumin. Interacts with NDRG1. Interacts with SCGB3A2. Interacts with NAXE and YJEFN3. Glycosylated. In terms of processing, palmitoylated. Post-translationally, phosphorylation sites are present in the extracellular medium.

It is found in the secreted. Its function is as follows. Participates in the reverse transport of cholesterol from tissues to the liver for excretion by promoting cholesterol efflux from tissues and by acting as a cofactor for the lecithin cholesterol acyltransferase (LCAT). As part of the SPAP complex, activates spermatozoa motility. This chain is Apolipoprotein A-I (APOA1), found in Octodon degus (Degu).